The sequence spans 114 residues: MTANVSGIGSVLQQMQSMAAQASGGVASPTAALAGSGAATAGTFASAMKASLDKISGDQQHALGEAKAFEVGAPNISLNDVMVDMQKANIGFQFGLQVRNKLVSAYNDIMQMSV.

It belongs to the FliE family.

Its subcellular location is the bacterial flagellum basal body. This Burkholderia cenocepacia (strain ATCC BAA-245 / DSM 16553 / LMG 16656 / NCTC 13227 / J2315 / CF5610) (Burkholderia cepacia (strain J2315)) protein is Flagellar hook-basal body complex protein FliE.